Here is a 614-residue protein sequence, read N- to C-terminus: Dihydroxy-acid dehydratase (614 aa).

D81 serves as a coordination point for Mg(2+). Position 122 (C122) interacts with [2Fe-2S] cluster. The Mg(2+) site is built by D123 and K124. Position 124 is an N6-carboxylysine (K124). C193 lines the [2Fe-2S] cluster pocket. E489 is a binding site for Mg(2+). The active-site Proton acceptor is S515.

It belongs to the IlvD/Edd family. Homodimer. Requires [2Fe-2S] cluster as cofactor. The cofactor is Mg(2+).

It catalyses the reaction (2R)-2,3-dihydroxy-3-methylbutanoate = 3-methyl-2-oxobutanoate + H2O. It carries out the reaction (2R,3R)-2,3-dihydroxy-3-methylpentanoate = (S)-3-methyl-2-oxopentanoate + H2O. Its pathway is amino-acid biosynthesis; L-isoleucine biosynthesis; L-isoleucine from 2-oxobutanoate: step 3/4. It functions in the pathway amino-acid biosynthesis; L-valine biosynthesis; L-valine from pyruvate: step 3/4. Functions in the biosynthesis of branched-chain amino acids. Catalyzes the dehydration of (2R,3R)-2,3-dihydroxy-3-methylpentanoate (2,3-dihydroxy-3-methylvalerate) into 2-oxo-3-methylpentanoate (2-oxo-3-methylvalerate) and of (2R)-2,3-dihydroxy-3-methylbutanoate (2,3-dihydroxyisovalerate) into 2-oxo-3-methylbutanoate (2-oxoisovalerate), the penultimate precursor to L-isoleucine and L-valine, respectively. The protein is Dihydroxy-acid dehydratase of Hahella chejuensis (strain KCTC 2396).